Reading from the N-terminus, the 45-residue chain is Mu-conotoxin-like Cal 12.1.2d (45 aa).

Disulfide bonds link Cys-3–Cys-16, Cys-11–Cys-28, Cys-18–Cys-33, and Cys-27–Cys-39. Trp-17 is modified (6'-bromotryptophan). At Pro-23 the chain carries 4-hydroxyproline. A 6'-bromotryptophan mark is found at Trp-37 and Trp-38. The residue at position 40 (Pro-40) is a 4-hydroxyproline.

Expressed by the venom duct.

It is found in the secreted. Its function is as follows. Mu-conotoxins block voltage-gated sodium channels. This toxin reversibly blocks voltage-gated sodium channel in cephalopods, with no alteration in the voltage dependence of sodium conductance or on the kinetics of inactivation. This chain is Mu-conotoxin-like Cal 12.1.2d, found in Californiconus californicus (California cone).